A 1050-amino-acid polypeptide reads, in one-letter code: MKDAERIPGPKPLPVVGNLLDIDPEHGLQSIIAFADKYGPLFQITINGEKQIFATSQALVDELCDESRFHKAVVTGLEVLRLLAHDGLFTAYHGERGWGIAHRILVPAFGPLRIRNMLDDMSDVAQQLCLKWARQGGSTSINITEDFTRLTLDTIALCTMGFRLNSFYNNETMHPFVQSMLYVLKEADVQANLPGIANSIRVSAQRRMHKNIEAMRTMARGIIQERRKNKNPVDDILNTLLNGRDPVTGEGMSDDSIIDNVITFLIAGHETTSGLLSFTFYFLIQHPHILKKAQEEVDETVGLAQISAQHLAELPYIDAILKESLRLMPTAPGFAVTPKKTEVLGGKWMINAGQPVNVLLPACLRDQSVFGPDADEFHPERMLAENFSKLPPNSWKPFGNGERGCIGRAFAWQEAQLVVAMILQTFDLVPDDPSYQLRIKETLTIKPDGFRIRALLRRGQTATGLSRRSMLVARDGSSGESSNHLAEARGDHAPARGQPVSFFYGSNSGTCKALAHQLASNMMSRGYTTQKLAPLDNAVGNLPRDQPVIILTTTYDGQPTDDAKKFVAWLETGNVPSLQGISYAVFGCGHHDWTQTFYRIPILIDDLMHKAGATRLAPRGAANAAVSDLFSDLEAWEETSLLPALRENFLPSNSTDFDPLNPHQIQLSLSKPRRVDLHKGLIEAKVTAVRVLTSPDTPEKRHLEFCFQGDTSLRPGDHLNILPVNPPSTVSRVLAQFNLAPDYNITVNSFNTLGLPQATPVSASELFSSYVELCQPATRNNLKALIAATQSDPDKQELNRLYDSYEFIVRDKRVSVLDLLEQFPSISLPIAAFISMLPALRVRTYSLSMAPSFKPSHSSLTFSVINEPAWRGSGQHLGVASNYLASLTSGSIFYFSPRPAKESFHLPKDPSNTPIIMICAGSGLAPFLSFIQDRMVLKQQYKPLAKAFLFFGCRGRSLDDLYHEELSEFEAAGVVEIRRAYSKTPDFDIAKGCRYVQHRLVTEGQAILSLWSQNATIYVCGSTNMAKGVEAVLQNMLGPLPKERYVTEIF.

Cysteine 405 provides a ligand contact to heme. A disordered region spans residues 467 to 491 (RRSMLVARDGSSGESSNHLAEARGD). Residues 500-641 (VSFFYGSNSG…DLEAWEETSL (142 aa)) form the Flavodoxin-like domain. FMN is bound by residues 506 to 510 (SNSGT) and 585 to 617 (VFGC…TRLA). The 229-residue stretch at 679–907 (KGLIEAKVTA…RPAKESFHLP (229 aa)) folds into the FAD-binding FR-type domain.

In the N-terminal section; belongs to the cytochrome P450 family. The cofactor is FAD. FMN is required as a cofactor. Requires heme as cofactor.

The enzyme catalyses 2 oxidized [cytochrome P450] + NADPH = 2 reduced [cytochrome P450] + NADP(+) + H(+). It carries out the reaction an organic molecule + reduced [NADPH--hemoprotein reductase] + O2 = an alcohol + oxidized [NADPH--hemoprotein reductase] + H2O + H(+). It catalyses the reaction dodecanoate + reduced [NADPH--hemoprotein reductase] + O2 = 5-hydroxydodecanoate + oxidized [NADPH--hemoprotein reductase] + H2O + H(+). The catalysed reaction is tetradecanoate + reduced [NADPH--hemoprotein reductase] + O2 = 7-hydroxytetradecanoate + oxidized [NADPH--hemoprotein reductase] + H2O + H(+). The enzyme catalyses dodecan-1-ol + reduced [NADPH--hemoprotein reductase] + O2 = 1,5-dodecanediol + oxidized [NADPH--hemoprotein reductase] + H2O + H(+). It carries out the reaction dodecan-1-ol + reduced [NADPH--hemoprotein reductase] + O2 = 1,4-dodecanediol + oxidized [NADPH--hemoprotein reductase] + H2O + H(+). It catalyses the reaction dodecan-1-ol + reduced [NADPH--hemoprotein reductase] + O2 = 1,6-dodecanediol + oxidized [NADPH--hemoprotein reductase] + H2O + H(+). Self-sufficient cytochrome P450 monooxygenase that catalyzes the regioselective in-chain hydroxylation of alkanes, fatty alcohols, and fatty acids at the omega-7 position. Performs hydroxylation of C10-C16 n-alkanes and C12 and C14 fatty alcohols; and thereby enables the one step biocatalytic synthesis of rare alcohols such as 5-dodecanol and 7-tetradecanol. Converts 1-dodecanol into 1,5-dodecanediol as major product with very little sub-terminally hydroxylated products with the 1,4-dodecanediol and 1,6-dodecanediol more abundant. Converts dodecanoic acid to 5-hydroxydodecanoic acid which can be further converted into delta-dodecalactone by lactonization of the 5-hydroxy acid at low pH. Also gives sub-terminal hydroxylation of dodecanoic acid with 9-hydroxydodecanoic acid being the second most abundant product. The sequence is that of Self-sufficient cytochrome P450 monooxygenase CYP505E5 from Aspergillus niger.